Reading from the N-terminus, the 396-residue chain is ATP synthase subunit beta, chloroplastic (396 aa).

74 to 81 (GGAGVGKT) is a binding site for ATP.

The protein belongs to the ATPase alpha/beta chains family. As to quaternary structure, F-type ATPases have 2 components, CF(1) - the catalytic core - and CF(0) - the membrane proton channel. CF(1) has five subunits: alpha(3), beta(3), gamma(1), delta(1), epsilon(1). CF(0) has four main subunits: a(1), b(1), b'(1) and c(9-12).

It is found in the plastid. It localises to the chloroplast thylakoid membrane. The enzyme catalyses ATP + H2O + 4 H(+)(in) = ADP + phosphate + 5 H(+)(out). Its function is as follows. Produces ATP from ADP in the presence of a proton gradient across the membrane. The catalytic sites are hosted primarily by the beta subunits. This chain is ATP synthase subunit beta, chloroplastic, found in Adiantum raddianum (Maidenhair fern).